Reading from the N-terminus, the 74-residue chain is Protein RALF-like 25 (74 aa).

The N-terminal stretch at 1-22 (MKTFMIILLVICSILIVGRVEA) is a signal peptide. Disulfide bonds link cysteine 35–cysteine 44 and cysteine 62–cysteine 68.

This sequence belongs to the plant rapid alkalinization factor (RALF) family.

It localises to the secreted. Its function is as follows. Cell signaling peptide that may regulate plant stress, growth, and development. Mediates a rapid alkalinization of extracellular space by mediating a transient increase in the cytoplasmic Ca(2+) concentration leading to a calcium-dependent signaling events through a cell surface receptor and a concomitant activation of some intracellular mitogen-activated protein kinases. This chain is Protein RALF-like 25 (RALFL25), found in Arabidopsis thaliana (Mouse-ear cress).